Reading from the N-terminus, the 274-residue chain is 4-deoxy-L-threo-5-hexosulose-uronate ketol-isomerase (274 aa).

Zn(2+) is bound by residues H192, H194, E199, and H241.

The protein belongs to the KduI family. Zn(2+) is required as a cofactor.

The enzyme catalyses 5-dehydro-4-deoxy-D-glucuronate = 3-deoxy-D-glycero-2,5-hexodiulosonate. It functions in the pathway glycan metabolism; pectin degradation; 2-dehydro-3-deoxy-D-gluconate from pectin: step 4/5. Catalyzes the isomerization of 5-dehydro-4-deoxy-D-glucuronate to 3-deoxy-D-glycero-2,5-hexodiulosonate. This chain is 4-deoxy-L-threo-5-hexosulose-uronate ketol-isomerase, found in Agrobacterium fabrum (strain C58 / ATCC 33970) (Agrobacterium tumefaciens (strain C58)).